A 77-amino-acid chain; its full sequence is Conotoxin Lt7.1 (77 aa).

Residues 1 to 19 (MEKLTILLLVAALLMSTQG) form the signal peptide. The propeptide occupies 20–49 (LIQSGGENRPKEKIKFLSKRKTVAESWWEG). Cystine bridges form between Cys51–Cys65, Cys58–Cys69, and Cys64–Cys74.

This sequence belongs to the conotoxin O2 superfamily. As to expression, expressed by the venom duct.

The protein localises to the secreted. This chain is Conotoxin Lt7.1, found in Conus litteratus (Lettered cone).